The chain runs to 133 residues: Otoraplin (133 aa).

An N-terminal signal peptide occupies residues 1–23 (MAKTFYVVVIVLCLGFIHQKAYG). 2 disulfide bridges follow: C35–C40 and C58–C132. An SH3 domain is found at 42-115 (YAISFGRAED…PSSLVTELTV (74 aa)).

The protein belongs to the MIA/OTOR family.

Its subcellular location is the secreted. The chain is Otoraplin (OTOR) from Aquarana catesbeiana (American bullfrog).